Reading from the N-terminus, the 445-residue chain is 3-phosphoshikimate 1-carboxyvinyltransferase (445 aa).

Lys28, Ser29, and Arg33 together coordinate 3-phosphoshikimate. Lys28 contributes to the phosphoenolpyruvate binding site. The phosphoenolpyruvate site is built by Gly101 and Arg129. Ser175, Gln177, Asp328, and Lys355 together coordinate 3-phosphoshikimate. Gln177 lines the phosphoenolpyruvate pocket. Residue Asp328 is the Proton acceptor of the active site. Phosphoenolpyruvate contacts are provided by Arg359 and Arg402.

The protein belongs to the EPSP synthase family. As to quaternary structure, monomer.

It is found in the cytoplasm. It carries out the reaction 3-phosphoshikimate + phosphoenolpyruvate = 5-O-(1-carboxyvinyl)-3-phosphoshikimate + phosphate. Its pathway is metabolic intermediate biosynthesis; chorismate biosynthesis; chorismate from D-erythrose 4-phosphate and phosphoenolpyruvate: step 6/7. Functionally, catalyzes the transfer of the enolpyruvyl moiety of phosphoenolpyruvate (PEP) to the 5-hydroxyl of shikimate-3-phosphate (S3P) to produce enolpyruvyl shikimate-3-phosphate and inorganic phosphate. The polypeptide is 3-phosphoshikimate 1-carboxyvinyltransferase (Rhodopseudomonas palustris (strain BisA53)).